We begin with the raw amino-acid sequence, 929 residues long: MTTPISTSRAASIVSSILPYSRYLKRVLENESELQQELLEQLHNPFTREEMLGFLQDSTAHLIDEADLHRLLRQLRKRVILRLAARDLAGLADLNEVMATMTALADVTIQFSLEFLHAAMVQPGHFGKPKGEKTGTEQQLLIVAMGKLGGGELNVSSDVDLVFIYPEDGETDGSKSITNHEFFLRLGRKLIASLNDYTVDGYVFRVDMRLRPYGENSPLAISLPMLEDYFVTQGREWERHAWIKSRVITGSSIAEAALMELIVRPFVFRKYLDFEAYEAMRSLHTQLRKEVDRRELHDNIKLGPGGIREIEFITQVFQLIRGGRDADLCIRPTLGVLQRLKQKQPLPEQTVEELIEAYYFLRKLEHRLQYLDDQQTQNLPQHSDDQILIAKSMGFTDYTGFLKHLDLHRQNVTRHFEQIFAVRRKAIKLGTFARIRPEQTNDNEIVKVFSNQLKTLGYIDPDKITARVQQFYDGTTFRQLSHPNQERILELMPTLMEVVTRFPPVEITLERMLRLLEKIGQYSAYLALLQEYPQTLPRVAKLVSISQWASDYLGSHPILLDELLAPSGLHTLPDWPTLKTELIHQLHHGNIPKAQIIEWQMDVLRHFQHAQVFRLLAVDLEGNLLLETLSDHLTALADLILDNVLQLAWQGLKKKHRKSPAFAIIGYGKLGGKELGYVSDLDIVYLYQDNHPDAMEIYTKLAQNINLWLTSHTSAGVLYETDLRLRPNGTSGLLVNSIEAFSLYQHEQAWVWEHQALTRARFVIGDSEVGEKFEQMRKNILCQPRDMENLKREILMMRTKMLEAHPNSTPLFDVKHDHGGIIDVEFIVQYLVLGYAHRYPQLTSNIGNIALLKLAGELGLTSAEKANAAFIAYRELRRTQHQLRLSGIPEATGTALPKDVSQKFARVTSDYLSSARRAVFQLWEDVFGT.

The segment at 1-422 is adenylyl removase; the sequence is MTTPISTSRA…TRHFEQIFAV (422 aa). The adenylyl transferase stretch occupies residues 429–929; it reads LGTFARIRPE…FQLWEDVFGT (501 aa).

The protein belongs to the GlnE family. Mg(2+) serves as cofactor.

It carries out the reaction [glutamine synthetase]-O(4)-(5'-adenylyl)-L-tyrosine + phosphate = [glutamine synthetase]-L-tyrosine + ADP. The enzyme catalyses [glutamine synthetase]-L-tyrosine + ATP = [glutamine synthetase]-O(4)-(5'-adenylyl)-L-tyrosine + diphosphate. Functionally, involved in the regulation of glutamine synthetase GlnA, a key enzyme in the process to assimilate ammonia. When cellular nitrogen levels are high, the C-terminal adenylyl transferase (AT) inactivates GlnA by covalent transfer of an adenylyl group from ATP to specific tyrosine residue of GlnA, thus reducing its activity. Conversely, when nitrogen levels are low, the N-terminal adenylyl removase (AR) activates GlnA by removing the adenylyl group by phosphorolysis, increasing its activity. The regulatory region of GlnE binds the signal transduction protein PII (GlnB) which indicates the nitrogen status of the cell. This is Bifunctional glutamine synthetase adenylyltransferase/adenylyl-removing enzyme from Nitrosomonas eutropha (strain DSM 101675 / C91 / Nm57).